The following is a 262-amino-acid chain: Glutamate racemase (262 aa).

Substrate is bound by residues 5–6 (DS) and 37–38 (YG). The Proton donor/acceptor role is filled by Cys-69. 70 to 71 (NT) lines the substrate pocket. The active-site Proton donor/acceptor is the Cys-181. Position 182–183 (182–183 (TH)) interacts with substrate.

This sequence belongs to the aspartate/glutamate racemases family.

The catalysed reaction is L-glutamate = D-glutamate. The protein operates within cell wall biogenesis; peptidoglycan biosynthesis. Provides the (R)-glutamate required for cell wall biosynthesis. The chain is Glutamate racemase from Buchnera aphidicola subsp. Acyrthosiphon pisum (strain Tuc7).